A 281-amino-acid chain; its full sequence is MNLPAHTALFTPSWHAELELGYGRFYDCTRPTQRRHKGPLRVQKHLYAEGPEVCQHIIVHPPGGIAGGDRLDISVNVGAHAWAQLTSPGAAKWYRAASPAFQQLELHVQPGATLEWLPQETIVFSNAQAELTTRIELHGDARLCYWDVVALGRPASGERFEHGHFQSHLDIRRDGTLLWHERQRIIGADGLLDSPIGLDGKTVFATLLLTGDVDSDLLEVCRSLSMPSPVRGNLTQLPGLIVARCLADEALHARAWLIEIWKRLRPALLGREAVMPRIWNT.

The protein belongs to the UreD family. As to quaternary structure, ureD, UreF and UreG form a complex that acts as a GTP-hydrolysis-dependent molecular chaperone, activating the urease apoprotein by helping to assemble the nickel containing metallocenter of UreC. The UreE protein probably delivers the nickel.

It is found in the cytoplasm. In terms of biological role, required for maturation of urease via the functional incorporation of the urease nickel metallocenter. The polypeptide is Urease accessory protein UreD 2 (Pseudomonas syringae pv. tomato (strain ATCC BAA-871 / DC3000)).